We begin with the raw amino-acid sequence, 325 residues long: Basic membrane protein A (325 aa).

The first 3 residues, 1-3 (FLS), serve as a signal peptide directing secretion. The N-palmitoyl cysteine moiety is linked to residue Cys4. Cys4 carries the S-diacylglycerol cysteine lipid modification.

The protein belongs to the BMP lipoprotein family. In terms of assembly, monomer.

It is found in the cell inner membrane. In terms of biological role, immunogenic protein. May be part of an ABC-type nucleoside uptake system involved in the purine salvage pathway. The polypeptide is Basic membrane protein A (bmpA) (Borreliella afzelii (Borrelia afzelii)).